The sequence spans 221 residues: Urease accessory protein UreF (221 aa).

This sequence belongs to the UreF family. UreD, UreF and UreG form a complex that acts as a GTP-hydrolysis-dependent molecular chaperone, activating the urease apoprotein by helping to assemble the nickel containing metallocenter of UreC. The UreE protein probably delivers the nickel.

The protein resides in the cytoplasm. Its function is as follows. Required for maturation of urease via the functional incorporation of the urease nickel metallocenter. This is Urease accessory protein UreF from Aliivibrio fischeri (strain MJ11) (Vibrio fischeri).